Reading from the N-terminus, the 1041-residue chain is Protein EGT2 (1041 aa).

The first 20 residues, 1 to 20, serve as a signal peptide directing secretion; sequence MNKLLLHLVRVISILGLANA. Residues Asn-65, Asn-103, Asn-161, Asn-175, Asn-249, Asn-332, Asn-401, Asn-435, Asn-465, Asn-485, Asn-506, Asn-526, Asn-544, and Asn-556 are each glycosylated (N-linked (GlcNAc...) asparagine). Residues 388–410 form a disordered region; the sequence is SSSSISLSAPSSSNSTFTTPSSS. Repeat 1 spans residues 457–492; the sequence is SSTLSYTSNVTISVSSATQHTTTPSYVSNSTTLSSS. Residues 457-962 are 9 X approximate repeats; it reads SSTLSYTSNV…TLKTSTFQKA (506 aa). 2 tandem repeats follow at residues 577 to 606 and 613 to 647. Residues Asn-635, Asn-636, Asn-657, and Asn-709 are each glycosylated (N-linked (GlcNAc...) asparagine). Repeat unit 4 spans residues 716–745; that stretch reads TDKSDTYSVISSTESAQVTEYDSLLPISTL. A glycan (N-linked (GlcNAc...) asparagine) is linked at Asn-756. 5 tandem repeats follow at residues 773 to 802, 811 to 840, 849 to 886, 887 to 924, and 925 to 962. Gly-1020 is lipidated: GPI-anchor amidated glycine. A propeptide spans 1021-1041 (removed in mature form); sequence AAGQLTIRIGSLLLGLISFLL.

The GPI-anchor is attached to the protein in the endoplasmic reticulum and serves to target the protein to the cell surface. There, the glucosamine-inositol phospholipid moiety is cleaved off and the GPI-modified mannoprotein is covalently attached via its lipidless GPI glycan remnant to the 1,6-beta-glucan of the outer cell wall layer.

The protein resides in the secreted. It localises to the cell wall. The protein localises to the membrane. Seems to be involved in the correct timing of cell separation after cytokinesis, as separation of mutant daughter cells is delayed. Could either be an enzyme necessary for glucans-degradation of the cell wall at the neck region between mother and daughter cells or a regulatory protein controlling this metabolic step. This chain is Protein EGT2 (EGT2), found in Saccharomyces cerevisiae (strain ATCC 204508 / S288c) (Baker's yeast).